A 123-amino-acid polypeptide reads, in one-letter code: Snaclec echicetin subunit beta (123 aa).

In terms of domain architecture, C-type lectin spans 1-121 (NCLPDWSVYE…SGEFYFVCKC (121 aa)). 3 disulfide bridges follow: cysteine 2-cysteine 13, cysteine 30-cysteine 119, and cysteine 96-cysteine 111.

The protein belongs to the snaclec family. In terms of assembly, heterodimer of subunits alpha and beta; disulfide-linked. Forms an active complex with the pentameric immunoglobuline Mkappa (IgMkappa). Expressed by the venom gland.

It is found in the secreted. Echicetin itself inhibits aggregation of washed platelets induced by vWF, thrombin or alboaggregin-A. However, when complexed with the pentameric plasma immunoglobulin Mkappa (IgMkappa), echicetin binds specifically to GPIb and activates platelets. This is caused by P-selectin expression and activation of alpha-IIb/beta-3 as well as tyrosine phosphorylation of several signal transduction molecules, including p53/56(LYN), p64, p72(SYK), p70 to p90, and p120. In vivo, it induces thrombocytopenia when injected into mice, probably accounting of activation of platelets rather than inhibition. In Echis carinatus sochureki (Saw-scaled viper), this protein is Snaclec echicetin subunit beta.